The chain runs to 285 residues: Anamorsin homolog 1 (285 aa).

Residues 1–150 (MEATVLLVTD…QKPTWETGSS (150 aa)) form an N-terminal SAM-like domain region. Residues 150–195 (SFSLKKKSVQKQESLPKPGALSVKPEMNVDLEDLIDEESLLSEEDL) are linker. 4 residues coordinate [2Fe-2S] cluster: Cys206, Cys215, Cys218, and Cys220. Residues 206–220 (CEVSTKRKACKNCTC) are fe-S binding site A. The [4Fe-4S] cluster site is built by Cys246, Cys249, Cys257, and Cys260. 2 consecutive short sequence motifs (cx2C motif) follow at residues 246–249 (CGNC) and 257–260 (CSSC). Residues 246–260 (CGNCGLGDAFRCSSC) form a fe-S binding site B region.

It belongs to the anamorsin family. As to quaternary structure, monomer. [2Fe-2S] cluster is required as a cofactor. [4Fe-4S] cluster serves as cofactor.

The protein localises to the cytoplasm. It localises to the mitochondrion intermembrane space. Component of the cytosolic iron-sulfur (Fe-S) protein assembly (CIA) machinery. Required for the maturation of extramitochondrial Fe-S proteins. Part of an electron transfer chain functioning in an early step of cytosolic Fe-S biogenesis, facilitating the de novo assembly of a [4Fe-4S] cluster on the cytosolic Fe-S scaffold complex. Electrons are transferred from NADPH via a FAD- and FMN-containing diflavin oxidoreductase. Together with the diflavin oxidoreductase, also required for the assembly of the diferric tyrosyl radical cofactor of ribonucleotide reductase (RNR), probably by providing electrons for reduction during radical cofactor maturation in the catalytic small subunit. This Picea sitchensis (Sitka spruce) protein is Anamorsin homolog 1.